The chain runs to 442 residues: Meiotically up-regulated gene 191 protein (442 aa).

Thr361 bears the Phosphothreonine mark. The segment covering 416–429 (RNNPSSGESTTLPQ) has biased composition (polar residues). The segment at 416–442 (RNNPSSGESTTLPQPSHGKKDKDCVIS) is disordered. Over residues 433–442 (GKKDKDCVIS) the composition is skewed to basic and acidic residues.

The protein localises to the cytoplasm. The protein resides in the nucleus. In terms of biological role, has a role in meiosis. The sequence is that of Meiotically up-regulated gene 191 protein (mug191) from Schizosaccharomyces pombe (strain 972 / ATCC 24843) (Fission yeast).